The following is a 158-amino-acid chain: Transcription elongation factor GreA (158 aa).

This sequence belongs to the GreA/GreB family.

Its function is as follows. Necessary for efficient RNA polymerase transcription elongation past template-encoded arresting sites. The arresting sites in DNA have the property of trapping a certain fraction of elongating RNA polymerases that pass through, resulting in locked ternary complexes. Cleavage of the nascent transcript by cleavage factors such as GreA or GreB allows the resumption of elongation from the new 3'terminus. GreA releases sequences of 2 to 3 nucleotides. The protein is Transcription elongation factor GreA of Agrobacterium fabrum (strain C58 / ATCC 33970) (Agrobacterium tumefaciens (strain C58)).